A 470-amino-acid chain; its full sequence is Uronate isomerase (470 aa).

It belongs to the metallo-dependent hydrolases superfamily. Uronate isomerase family.

It catalyses the reaction D-glucuronate = D-fructuronate. The enzyme catalyses aldehydo-D-galacturonate = keto-D-tagaturonate. The protein operates within carbohydrate metabolism; pentose and glucuronate interconversion. The sequence is that of Uronate isomerase from Serratia proteamaculans (strain 568).